Here is a 305-residue protein sequence, read N- to C-terminus: Methionyl-tRNA formyltransferase (305 aa).

111–114 (SLLP) is a (6S)-5,6,7,8-tetrahydrofolate binding site.

The protein belongs to the Fmt family.

It catalyses the reaction L-methionyl-tRNA(fMet) + (6R)-10-formyltetrahydrofolate = N-formyl-L-methionyl-tRNA(fMet) + (6S)-5,6,7,8-tetrahydrofolate + H(+). In terms of biological role, attaches a formyl group to the free amino group of methionyl-tRNA(fMet). The formyl group appears to play a dual role in the initiator identity of N-formylmethionyl-tRNA by promoting its recognition by IF2 and preventing the misappropriation of this tRNA by the elongation apparatus. In Campylobacter jejuni subsp. jejuni serotype O:2 (strain ATCC 700819 / NCTC 11168), this protein is Methionyl-tRNA formyltransferase.